We begin with the raw amino-acid sequence, 339 residues long: DNA-directed RNA polymerase subunit alpha (339 aa).

The alpha N-terminal domain (alpha-NTD) stretch occupies residues Met-1–Glu-233. Residues Ile-267 to Phe-339 form an alpha C-terminal domain (alpha-CTD) region.

It belongs to the RNA polymerase alpha chain family. In terms of assembly, in plastids the minimal PEP RNA polymerase catalytic core is composed of four subunits: alpha, beta, beta', and beta''. When a (nuclear-encoded) sigma factor is associated with the core the holoenzyme is formed, which can initiate transcription.

It localises to the plastid. The protein localises to the chloroplast. The catalysed reaction is RNA(n) + a ribonucleoside 5'-triphosphate = RNA(n+1) + diphosphate. Its function is as follows. DNA-dependent RNA polymerase catalyzes the transcription of DNA into RNA using the four ribonucleoside triphosphates as substrates. This chain is DNA-directed RNA polymerase subunit alpha, found in Populus trichocarpa (Western balsam poplar).